A 674-amino-acid chain; its full sequence is Kinesin-like protein KIFC1 (674 aa).

3 positions are modified to phosphoserine: Ser28, Ser33, and Ser35. The interval 66–96 (TSRPRGPLLSTVSQTQGHTAAQKGPKKTGPR) is disordered. Positions 75 to 84 (STVSQTQGHT) are enriched in polar residues. Residues 146-315 (DLNEELKRYR…QELKGNIRVF (170 aa)) are a coiled coil. Positions 311–664 (NIRVFCRVRP…LRFASKVNQC (354 aa)) constitute a Kinesin motor domain. Residues 327–366 (TPSPGFLVFPPGPAGPSDPPTGLSLSRSDDRRSTLTGAPA) form a disordered region. Over residues 336 to 345 (PPGPAGPSDP) the composition is skewed to pro residues. The residue at position 360 (Thr360) is a Phosphothreonine. Residue 411–418 (GQTGSGKT) coordinates ATP.

It belongs to the TRAFAC class myosin-kinesin ATPase superfamily. Kinesin family. NCD subfamily. In terms of assembly, binds NUBP1 and NUBP2. Interacts with PPP1R42. As to expression, highly expressed in 14 dpc embryos, spleen and NIH3T3 cells. Also expressed in testis, brain, lung, kidney and cultured astrocytes. Very low levels in skeletal muscle and heart.

The protein localises to the nucleus. It localises to the cytoplasm. Its subcellular location is the cytoskeleton. The protein resides in the microtubule organizing center. It is found in the centrosome. The protein localises to the spindle. It localises to the early endosome. Functionally, minus end-directed microtubule-dependent motor required for bipolar spindle formation. May contribute to movement of early endocytic vesicles. Regulates cilium formation and structure. This Mus musculus (Mouse) protein is Kinesin-like protein KIFC1.